Here is a 164-residue protein sequence, read N- to C-terminus: uncharacterized protein (164 aa).

In terms of domain architecture, RDD spans tyrosine 26–histidine 158. 2 consecutive transmembrane segments (helical) span residues alanine 35 to phenylalanine 55 and methionine 66 to leucine 86.

The protein localises to the cell membrane. This is an uncharacterized protein from Bacillus subtilis (strain 168).